We begin with the raw amino-acid sequence, 493 residues long: Glycerol kinase (493 aa).

Thr12 serves as a coordination point for ADP. ATP is bound by residues Thr12, Thr13, and Ser14. Thr12 lines the sn-glycerol 3-phosphate pocket. Arg16 serves as a coordination point for ADP. Sn-glycerol 3-phosphate-binding residues include Arg82, Glu83, Tyr132, and Asp239. Arg82, Glu83, Tyr132, Asp239, and Gln240 together coordinate glycerol. ADP-binding residues include Thr261 and Gly303. Residues Thr261, Gly303, Gln307, and Gly402 each contribute to the ATP site. 2 residues coordinate ADP: Gly402 and Asn406.

The protein belongs to the FGGY kinase family.

The enzyme catalyses glycerol + ATP = sn-glycerol 3-phosphate + ADP + H(+). It functions in the pathway polyol metabolism; glycerol degradation via glycerol kinase pathway; sn-glycerol 3-phosphate from glycerol: step 1/1. Key enzyme in the regulation of glycerol uptake and metabolism. Catalyzes the phosphorylation of glycerol to yield sn-glycerol 3-phosphate. The chain is Glycerol kinase from Thermococcus gammatolerans (strain DSM 15229 / JCM 11827 / EJ3).